We begin with the raw amino-acid sequence, 267 residues long: Methylglyoxal reductase DkgB (267 aa).

The active-site Proton donor is Tyr-39. Residue His-97 participates in substrate binding. 179 to 231 provides a ligand contact to NADP(+); sequence MTLAYGKALAEPVIKTIAEQHGATPAQVILSWAMQLGYGVIPSSTKAANLASN.

It belongs to the aldo/keto reductase family. In terms of assembly, monomer.

It is found in the cytoplasm. The catalysed reaction is hydroxyacetone + NADP(+) = methylglyoxal + NADPH + H(+). Functionally, aldo-keto reductase that significantly contributes to cellular methylglyoxal detoxification by catalyzing the NADPH-dependent conversion of methylglyoxal to acetol. The chain is Methylglyoxal reductase DkgB from Yersinia pestis.